A 101-amino-acid polypeptide reads, in one-letter code: Small ribosomal subunit protein bS18c (101 aa).

Belongs to the bacterial ribosomal protein bS18 family. Part of the 30S ribosomal subunit.

The protein localises to the plastid. The protein resides in the chloroplast. This Populus alba (White poplar) protein is Small ribosomal subunit protein bS18c.